A 387-amino-acid chain; its full sequence is Radial spoke protein 14 (387 aa).

ARM repeat units follow at residues 24–67 (KALP…ELLS), 69–109 (PVNH…LLAA), 111–150 (EVGARDLAQHSGLDALAAALEDPSEGVRDEAYGALIEAAR), 154–198 (TRRA…TCTQ), 204–244 (GILS…ALAT), 245–286 (REDA…AITI), 289–328 (EGKYAALESPGGLAGLVSVLDPCHEQLCINAMTAVSNVAE), and 330–370 (PEAR…QCRF).

It belongs to the flagellar radial spoke RSP14 family.

Its subcellular location is the cytoplasm. The protein resides in the cytoskeleton. It localises to the flagellum axoneme. This chain is Radial spoke protein 14 (RSP14), found in Chlamydomonas reinhardtii (Chlamydomonas smithii).